The primary structure comprises 232 residues: Large ribosomal subunit protein uL1 (232 aa).

The protein belongs to the universal ribosomal protein uL1 family. In terms of assembly, part of the 50S ribosomal subunit.

Binds directly to 23S rRNA. The L1 stalk is quite mobile in the ribosome, and is involved in E site tRNA release. Its function is as follows. Protein L1 is also a translational repressor protein, it controls the translation of the L11 operon by binding to its mRNA. The chain is Large ribosomal subunit protein uL1 from Bordetella bronchiseptica (strain ATCC BAA-588 / NCTC 13252 / RB50) (Alcaligenes bronchisepticus).